We begin with the raw amino-acid sequence, 228 residues long: MLTRKQMELLDFIKTRMDRDGVPPSFDEMKDALDLRSKSGIHRLITALEERGFIRRLAHRARAIEIVKLPEAMERAGFAPRVIEGDRTEPPRGARPVETANALDLPLMGRIAAGLPIEAITDGAQSVTVPSMMLSGRGQHYALEVRGDSMIEAGINDGDIVVIREQQTADNGDIVVALVADHEATLKRFRRRGGMIALEPANASYETQVYPDHMVKVQGRLVGLIRSY.

The segment at residues Phe-26–Thr-46 is a DNA-binding region (H-T-H motif). Active-site for autocatalytic cleavage activity residues include Ser-149 and Lys-187.

This sequence belongs to the peptidase S24 family. In terms of assembly, homodimer.

It carries out the reaction Hydrolysis of Ala-|-Gly bond in repressor LexA.. Its function is as follows. Represses a number of genes involved in the response to DNA damage (SOS response), including recA and lexA. In the presence of single-stranded DNA, RecA interacts with LexA causing an autocatalytic cleavage which disrupts the DNA-binding part of LexA, leading to derepression of the SOS regulon and eventually DNA repair. The polypeptide is LexA repressor (Cereibacter sphaeroides (strain ATCC 17025 / ATH 2.4.3) (Rhodobacter sphaeroides)).